Consider the following 372-residue polypeptide: Queuine tRNA-ribosyltransferase (372 aa).

The active-site Proton acceptor is Asp-89. Substrate-binding positions include 89 to 93 (DSGGF), Asp-161, and Gly-232. An RNA binding region spans residues 262-268 (GIGDLPS). Asp-281 serves as the catalytic Nucleophile. The segment at 286 to 290 (TKAAR) is RNA binding; important for wobble base 34 recognition. The Zn(2+) site is built by Cys-319, Cys-321, Cys-324, and His-351.

Belongs to the queuine tRNA-ribosyltransferase family. As to quaternary structure, homodimer. Within each dimer, one monomer is responsible for RNA recognition and catalysis, while the other monomer binds to the replacement base PreQ1. It depends on Zn(2+) as a cofactor.

It carries out the reaction 7-aminomethyl-7-carbaguanine + guanosine(34) in tRNA = 7-aminomethyl-7-carbaguanosine(34) in tRNA + guanine. It functions in the pathway tRNA modification; tRNA-queuosine biosynthesis. Its function is as follows. Catalyzes the base-exchange of a guanine (G) residue with the queuine precursor 7-aminomethyl-7-deazaguanine (PreQ1) at position 34 (anticodon wobble position) in tRNAs with GU(N) anticodons (tRNA-Asp, -Asn, -His and -Tyr). Catalysis occurs through a double-displacement mechanism. The nucleophile active site attacks the C1' of nucleotide 34 to detach the guanine base from the RNA, forming a covalent enzyme-RNA intermediate. The proton acceptor active site deprotonates the incoming PreQ1, allowing a nucleophilic attack on the C1' of the ribose to form the product. After dissociation, two additional enzymatic reactions on the tRNA convert PreQ1 to queuine (Q), resulting in the hypermodified nucleoside queuosine (7-(((4,5-cis-dihydroxy-2-cyclopenten-1-yl)amino)methyl)-7-deazaguanosine). This chain is Queuine tRNA-ribosyltransferase, found in Chlamydia trachomatis serovar L2 (strain ATCC VR-902B / DSM 19102 / 434/Bu).